An 89-amino-acid polypeptide reads, in one-letter code: Small ribosomal subunit protein uS15 (89 aa).

This sequence belongs to the universal ribosomal protein uS15 family. In terms of assembly, part of the 30S ribosomal subunit. Forms a bridge to the 50S subunit in the 70S ribosome, contacting the 23S rRNA.

In terms of biological role, one of the primary rRNA binding proteins, it binds directly to 16S rRNA where it helps nucleate assembly of the platform of the 30S subunit by binding and bridging several RNA helices of the 16S rRNA. Its function is as follows. Forms an intersubunit bridge (bridge B4) with the 23S rRNA of the 50S subunit in the ribosome. This chain is Small ribosomal subunit protein uS15, found in Chlorobium luteolum (strain DSM 273 / BCRC 81028 / 2530) (Pelodictyon luteolum).